Here is a 574-residue protein sequence, read N- to C-terminus: MLREFSKWGVEASPGKAWERKRSLLRGAVGRYRGATGGDLFWAPFPSWGTMEFPEHSQQLLQSLREQRSQGFLCDCTVMVGSTQFLAHRAVLASCSPFFQLFYKERELDKRDLVCIHNEIVTAPAFGLLLDFMYAGQLTLRGDTPVEDVLAAASYLHMNDIVKVCKRRLQARALAEADSTKKEEETNSQLPSLEFLSSTSRGTQPSLASAETSGHWGKGEWKGSAAPSPTVRPPDEPPMSSGADTTQPGMEVDAPHLRAPHPPVADVSLASPSSSTETIPTNYFSSGISAVSLEPLPSLDVGPESLRVVEPKDPGGPLQGFYPPASAPTSAPAPVSAPVPSQAPAPAEAELVQVKVEAIVISDEETDVSDEQPQGPERAFPSGGAVYGAQPSQPEAFEDPGAAGLEEVGPSDHFLPTDPHLPYHLLPGAGQYHRGLVTSPLPAPASLHEPLYLSSEYEAAPGSFGVFTEDVPTCKTCGKTFSCSYTLRRHATVHTRERPYECRYCLRSYTQSGDLYRHIRKAHNEDLAKRSKPDPEVGPLLGVQPLPGSPTADRQSSSGGGPPKDFVLAPKTNI.

In terms of domain architecture, BTB spans 74 to 142; sequence CDCTVMVGST…MYAGQLTLRG (69 aa). 2 disordered regions span residues 175-277 and 305-346; these read AEAD…SSTE and SLRV…APAP. Glycyl lysine isopeptide (Lys-Gly) (interchain with G-Cter in SUMO2) cross-links involve residues Lys181 and Lys182. The span at 187-212 shows a compositional bias: polar residues; it reads NSQLPSLEFLSSTSRGTQPSLASAET. The span at 323–334 shows a compositional bias: low complexity; it reads PPASAPTSAPAP. At Ser362 the chain carries Phosphoserine. The segment at 364–403 is disordered; it reads EETDVSDEQPQGPERAFPSGGAVYGAQPSQPEAFEDPGAA. 2 C2H2-type zinc fingers span residues 472–494 and 500–523; these read PTCK…ATVH and YECR…RKAH. The span at 526-535 shows a compositional bias: basic and acidic residues; that stretch reads DLAKRSKPDP. The disordered stretch occupies residues 526 to 574; that stretch reads DLAKRSKPDPEVGPLLGVQPLPGSPTADRQSSSGGGPPKDFVLAPKTNI. Residue Lys532 forms a Glycyl lysine isopeptide (Lys-Gly) (interchain with G-Cter in SUMO2) linkage. Ser549 is modified (phosphoserine).

It is found in the nucleus. Functionally, may be involved in transcriptional regulation. The protein is Zinc finger and BTB domain-containing protein 3 (ZBTB3) of Homo sapiens (Human).